Here is a 2241-residue protein sequence, read N- to C-terminus: Large tegument protein deneddylase (2241 aa).

The segment at Met-1–Ser-238 is deubiquitination activity. The Peptidase C76 domain occupies Thr-4–Asp-226. Residues Cys-24, Asp-160, and His-162 contribute to the active site. The disordered stretch occupies residues Ala-239 to Ala-314. A compositionally biased stretch (low complexity) spans Asp-240–Pro-250. Positions Ser-251 to Val-268 are enriched in pro residues. Residues Pro-304–Ala-314 are compositionally biased toward low complexity. The interval Ser-327 to Pro-331 is interaction with inner tegument protein. Disordered regions lie at residues Met-1187–Asp-1230 and Pro-2118–Arg-2152. 2 stretches are compositionally biased toward basic and acidic residues: residues Thr-1190–Arg-1199 and Gln-2142–Arg-2152.

Belongs to the herpesviridae large tegument protein family. As to quaternary structure, interacts with host CUL1 and CUL4A; these interactions inhibit the E3 ligase activity of cullins. Interacts with inner tegument protein. Interacts with capsid vertex specific component CVC2. Interacts with the major capsid protein/MCP.

It localises to the virion tegument. Its subcellular location is the host cytoplasm. The protein localises to the host nucleus. It carries out the reaction Thiol-dependent hydrolysis of ester, thioester, amide, peptide and isopeptide bonds formed by the C-terminal Gly of ubiquitin (a 76-residue protein attached to proteins as an intracellular targeting signal).. Its function is as follows. Large tegument protein that plays multiple roles in the viral cycle. During viral entry, remains associated with the capsid while most of the tegument is detached and participates in the capsid transport toward the host nucleus. Plays a role in the routing of the capsid at the nuclear pore complex and subsequent uncoating. Within the host nucleus, acts as a deneddylase and promotes the degradation of nuclear CRLs (cullin-RING ubiquitin ligases) and thereby stabilizes nuclear CRL substrates, while cytoplasmic CRLs remain unaffected. These modifications prevent host cell cycle S-phase progression and create a favorable environment allowing efficient viral genome replication. Participates later in the secondary envelopment of capsids. Indeed, plays a linker role for the association of the outer viral tegument to the capsids together with the inner tegument protein. The chain is Large tegument protein deneddylase (UL48) from Homo sapiens (Human).